The primary structure comprises 148 residues: Snaclec 2 (148 aa).

The first 23 residues, 1 to 23, serve as a signal peptide directing secretion; that stretch reads MGRFIFVSFGLLVVFLSLSGTEA. Disulfide bonds link C27-C38, C55-C144, and C121-C136. Positions 34 to 145 constitute a C-type lectin domain; it reads YDQNCYKAFE…CSGTHSFVCK (112 aa).

Belongs to the snaclec family. In terms of assembly, heterodimer; disulfide-linked. As to expression, expressed by the venom gland.

The protein localises to the secreted. In terms of biological role, interferes with one step of hemostasis (modulation of platelet aggregation, or coagulation cascade, for example). This is Snaclec 2 from Echis ocellatus (Ocellated saw-scaled viper).